A 335-amino-acid polypeptide reads, in one-letter code: Fructose-1,6-bisphosphatase class 1 (335 aa).

The Mg(2+) site is built by E92, D114, L116, and D117. Substrate is bound by residues 117–120 (DGSS), N209, and K275. E281 lines the Mg(2+) pocket.

Belongs to the FBPase class 1 family. As to quaternary structure, homotetramer. It depends on Mg(2+) as a cofactor.

It is found in the cytoplasm. It carries out the reaction beta-D-fructose 1,6-bisphosphate + H2O = beta-D-fructose 6-phosphate + phosphate. It participates in carbohydrate biosynthesis; gluconeogenesis. The chain is Fructose-1,6-bisphosphatase class 1 from Polaromonas sp. (strain JS666 / ATCC BAA-500).